A 497-amino-acid chain; its full sequence is Guanosine-5'-triphosphate,3'-diphosphate pyrophosphatase (497 aa).

Belongs to the GppA/Ppx family. GppA subfamily.

It carries out the reaction guanosine 3'-diphosphate 5'-triphosphate + H2O = guanosine 3',5'-bis(diphosphate) + phosphate + H(+). The protein operates within purine metabolism; ppGpp biosynthesis; ppGpp from GTP: step 2/2. Its function is as follows. Catalyzes the conversion of pppGpp to ppGpp. Guanosine pentaphosphate (pppGpp) is a cytoplasmic signaling molecule which together with ppGpp controls the 'stringent response', an adaptive process that allows bacteria to respond to amino acid starvation, resulting in the coordinated regulation of numerous cellular activities. This chain is Guanosine-5'-triphosphate,3'-diphosphate pyrophosphatase, found in Vibrio vulnificus (strain YJ016).